We begin with the raw amino-acid sequence, 244 residues long: Homeobox-leucine zipper protein HOX14 (244 aa).

The disordered stretch occupies residues Ala-25–Arg-64. The segment covering Arg-35–Ala-44 has biased composition (basic residues). Residues Cys-46–Val-56 are compositionally biased toward gly residues. The homeobox DNA-binding region spans Gly-59–Leu-118. Residues Gln-108–Ser-167 adopt a coiled-coil conformation.

It belongs to the HD-ZIP homeobox family. Class I subfamily. Expressed in roots, stems, leaf blades and panicles.

It is found in the nucleus. Functionally, probable transcription factor. This is Homeobox-leucine zipper protein HOX14 (HOX14) from Oryza sativa subsp. indica (Rice).